A 441-amino-acid polypeptide reads, in one-letter code: Asparagine--tRNA ligase, mitochondrial (441 aa).

This sequence belongs to the class-II aminoacyl-tRNA synthetase family.

The protein resides in the mitochondrion. It carries out the reaction tRNA(Asn) + L-asparagine + ATP = L-asparaginyl-tRNA(Asn) + AMP + diphosphate + H(+). In Schizosaccharomyces pombe (strain 972 / ATCC 24843) (Fission yeast), this protein is Asparagine--tRNA ligase, mitochondrial (slm5).